Reading from the N-terminus, the 191-residue chain is Clusterin (191 aa).

4 N-linked (GlcNAc...) asparagine glycosylation sites follow: asparagine 79, asparagine 116, asparagine 142, and asparagine 162. A Phosphoserine modification is found at serine 184.

Belongs to the clusterin family. Antiparallel disulfide-linked heterodimer of an alpha chain and a beta chain. Self-associates and forms higher oligomers. Interacts with a broad range of misfolded proteins, including APP, APOC2 and LYZ. Slightly acidic pH promotes interaction with misfolded proteins. Forms high-molecular weight oligomers upon interaction with misfolded proteins. Interacts with APOA1, LRP2, CLUAP1 and PON1. Interacts with the complement membrane attack complex. Interacts (via alpha chain) with XRCC6. Interacts with SYVN1, COMMD1, BTRC, CUL1 and with ubiquitin and SCF (SKP1-CUL1-F-box protein) E3 ubiquitin-protein ligase complexes. Interacts (via alpha chain) with BAX in stressed cells, where BAX undergoes a conformation change leading to association with the mitochondrial membrane. Does not interact with BAX in unstressed cells. Found in a complex with LTF, CLU, EPPIN and SEMG1. Interacts (immaturely glycosylated pre-secreted form) with HSPA5; this interaction promotes CLU stability and facilitates stress-induced CLU retrotranslocation from the secretory pathway to the mitochondria, thereby reducing stress-induced apoptosis by stabilizing mitochondrial membrane integrity. Interacts with BCL2L1; this interaction releases and activates BAX and promotes cell death. Interacts with TGFBR2 and ACVR1. Interacts (secreted form) with STMN3; this interaction may act as an important modulator during neuronal differentiation. In terms of processing, proteolytically cleaved on its way through the secretory system, probably within the Golgi lumen. Proteolytic cleavage is not necessary for its chaperone activity. All non-secreted forms are not proteolytically cleaved. Chaperone activity of uncleaved forms is dependent on a non-reducing environment. Post-translationally, polyubiquitinated, leading to proteasomal degradation. Under cellular stress, the intracellular level of cleaved form is reduced due to proteasomal degradation. Heavily N-glycosylated. About 30% of the protein mass is comprised of complex N-linked carbohydrate. Endoplasmic reticulum (ER) stress induces changes in glycosylation status and increases level of hypoglycosylated forms. Core carbohydrates are essential for chaperone activity. Non-secreted forms are hypoglycosylated or unglycosylated.

The protein localises to the secreted. It is found in the nucleus. Its subcellular location is the cytoplasm. The protein resides in the mitochondrion membrane. It localises to the cytosol. The protein localises to the microsome. It is found in the endoplasmic reticulum. Its subcellular location is the mitochondrion. The protein resides in the perinuclear region. It localises to the cytoplasmic vesicle. The protein localises to the secretory vesicle. It is found in the chromaffin granule. In terms of biological role, functions as extracellular chaperone that prevents aggregation of non native proteins. Prevents stress-induced aggregation of blood plasma proteins. Inhibits formation of amyloid fibrils by APP, APOC2, B2M, CALCA, CSN3, SNCA and aggregation-prone LYZ variants (in vitro). Does not require ATP. Maintains partially unfolded proteins in a state appropriate for subsequent refolding by other chaperones, such as HSPA8/HSC70. Does not refold proteins by itself. Binding to cell surface receptors triggers internalization of the chaperone-client complex and subsequent lysosomal or proteasomal degradation. When secreted, protects cells against apoptosis and against cytolysis by complement: inhibits assembly of the complement membrane attack complex (MAC) by preventing polymerization of C9 pore component of the MAC complex. Intracellular forms interact with ubiquitin and SCF (SKP1-CUL1-F-box protein) E3 ubiquitin-protein ligase complexes and promote the ubiquitination and subsequent proteasomal degradation of target proteins. Promotes proteasomal degradation of COMMD1 and IKBKB. Modulates NF-kappa-B transcriptional activity. Following stress, promotes apoptosis. Inhibits apoptosis when associated with the mitochondrial membrane by interference with BAX-dependent release of cytochrome c into the cytoplasm. Plays a role in the regulation of cell proliferation. An intracellular form suppresses stress-induced apoptosis by stabilizing mitochondrial membrane integrity through interaction with HSPA5. Secreted form does not affect caspase or BAX-mediated intrinsic apoptosis and TNF-induced NF-kappa-B-activity. Secreted form act as an important modulator during neuronal differentiation through interaction with STMN3. Plays a role in the clearance of immune complexes that arise during cell injury. The polypeptide is Clusterin (Mesocricetus auratus (Golden hamster)).